Reading from the N-terminus, the 463-residue chain is Probable Xaa-Pro aminopeptidase PEPP (463 aa).

Positions 259, 270, 393, and 433 each coordinate Mn(2+).

This sequence belongs to the peptidase M24B family. Requires Mn(2+) as cofactor.

It catalyses the reaction Release of any N-terminal amino acid, including proline, that is linked to proline, even from a dipeptide or tripeptide.. Functionally, catalyzes the removal of a penultimate prolyl residue from the N-termini of peptides. The polypeptide is Probable Xaa-Pro aminopeptidase PEPP (PEPP) (Phaeosphaeria nodorum (strain SN15 / ATCC MYA-4574 / FGSC 10173) (Glume blotch fungus)).